The following is a 261-amino-acid chain: NAD kinase (261 aa).

Asp54 serves as the catalytic Proton acceptor. Residues 54–55 (DG), 123–124 (ND), Arg150, Asp152, and 163–168 (TAYSLS) each bind NAD(+).

Belongs to the NAD kinase family. The cofactor is a divalent metal cation.

It localises to the cytoplasm. The catalysed reaction is NAD(+) + ATP = ADP + NADP(+) + H(+). In terms of biological role, involved in the regulation of the intracellular balance of NAD and NADP, and is a key enzyme in the biosynthesis of NADP. Catalyzes specifically the phosphorylation on 2'-hydroxyl of the adenosine moiety of NAD to yield NADP. The sequence is that of NAD kinase from Caldicellulosiruptor bescii (strain ATCC BAA-1888 / DSM 6725 / KCTC 15123 / Z-1320) (Anaerocellum thermophilum).